The primary structure comprises 230 residues: Ion-translocating oxidoreductase complex subunit E (230 aa).

Helical transmembrane passes span Ala-18–Ala-38, Leu-39–Leu-59, Thr-63–Val-83, Leu-86–Val-106, Trp-125–Leu-145, and Pro-182–Val-202.

The protein belongs to the NqrDE/RnfAE family. As to quaternary structure, the complex is composed of six subunits: RsxA, RsxB, RsxC, RsxD, RsxE and RsxG.

It localises to the cell inner membrane. Part of a membrane-bound complex that couples electron transfer with translocation of ions across the membrane. Required to maintain the reduced state of SoxR. This Salmonella arizonae (strain ATCC BAA-731 / CDC346-86 / RSK2980) protein is Ion-translocating oxidoreductase complex subunit E.